The chain runs to 184 residues: Ras-related protein Rap-1b (184 aa).

10–18 is a binding site for GTP; it reads GSGGVGKSA. The tract at residues 25 to 67 is interaction with KRIT1; the sequence is QGIFVEKYDPTIEDSYRKQVEVDAQQCMLEILDTAGTEQFTAM. The Effector region motif lies at 32 to 40; that stretch reads YDPTIEDSY. At S39 the chain carries ADP-ribosylserine; by botulinum toxin. Residues 57-61, 116-119, and 147-149 each bind GTP; these read DTAGT, NKCD, and SAK. Position 179 is a phosphoserine; by PKA (S179). C181 is subject to Cysteine methyl ester. C181 carries the S-geranylgeranyl cysteine lipid modification. Residues 182–184 constitute a propeptide, removed in mature form; sequence QLL.

Belongs to the small GTPase superfamily. Ras family. In terms of assembly, heterodimer with RAP1GAP. Interacts with EPAC2. Interacts with SGSM1. Interacts with SGSM2. Interacts with SGSM3. Interacts with KRIT1. Interacts with RAP1GDS1.

It localises to the cell membrane. The protein localises to the cytoplasm. The protein resides in the cytosol. It is found in the cell junction. It catalyses the reaction GTP + H2O = GDP + phosphate + H(+). Activated by guanine nucleotide-exchange factor (GEF) EPAC2 in a cAMP-dependent manner. Functionally, GTP-binding protein that possesses intrinsic GTPase activity. Contributes to the polarizing activity of KRIT1 and CDH5 in the establishment and maintenance of correct endothelial cell polarity and vascular lumen. Required for the localization of phosphorylated PRKCZ, PARD3 and TIAM1 to the cell junction. Plays a role in the establishment of basal endothelial barrier function. This Rattus norvegicus (Rat) protein is Ras-related protein Rap-1b (Rap1b).